A 492-amino-acid chain; its full sequence is Ketol-acid reductoisomerase (NADP(+)) (492 aa).

The region spanning 14-208 (LDQLGKCRFM…GGHRAGVLQS (195 aa)) is the KARI N-terminal Rossmann domain. NADP(+) is bound by residues 45 to 48 (CGAQ), Arg-68, Arg-76, Ser-78, and 108 to 110 (DKQ). The active site involves His-132. An NADP(+)-binding site is contributed by Gly-158. KARI C-terminal knotted domains lie at 209–344 (SFVA…NAPQ) and 345–485 (FDGK…MKDM). Mg(2+)-binding residues include Asp-217, Glu-221, Glu-389, and Glu-393. Ser-414 is a binding site for substrate.

This sequence belongs to the ketol-acid reductoisomerase family. Requires Mg(2+) as cofactor.

It catalyses the reaction (2R)-2,3-dihydroxy-3-methylbutanoate + NADP(+) = (2S)-2-acetolactate + NADPH + H(+). It carries out the reaction (2R,3R)-2,3-dihydroxy-3-methylpentanoate + NADP(+) = (S)-2-ethyl-2-hydroxy-3-oxobutanoate + NADPH + H(+). It functions in the pathway amino-acid biosynthesis; L-isoleucine biosynthesis; L-isoleucine from 2-oxobutanoate: step 2/4. It participates in amino-acid biosynthesis; L-valine biosynthesis; L-valine from pyruvate: step 2/4. Functionally, involved in the biosynthesis of branched-chain amino acids (BCAA). Catalyzes an alkyl-migration followed by a ketol-acid reduction of (S)-2-acetolactate (S2AL) to yield (R)-2,3-dihydroxy-isovalerate. In the isomerase reaction, S2AL is rearranged via a Mg-dependent methyl migration to produce 3-hydroxy-3-methyl-2-ketobutyrate (HMKB). In the reductase reaction, this 2-ketoacid undergoes a metal-dependent reduction by NADPH to yield (R)-2,3-dihydroxy-isovalerate. The polypeptide is Ketol-acid reductoisomerase (NADP(+)) (Pectobacterium carotovorum subsp. carotovorum (strain PC1)).